The primary structure comprises 1276 residues: Botulinum neurotoxin type D (1276 aa).

Histidine 229 contacts Zn(2+). Glutamate 230 is an active-site residue. Zn(2+) is bound by residues histidine 233 and glutamate 269. Cysteine 437 and cysteine 450 form a disulfide bridge. The translocation domain (TD) stretch occupies residues 443 to 862 (NSRDDSTCIK…LKDIINEYFN (420 aa)). The segment at 458-547 (LPYVADKDSI…DYLNSYYYLE (90 aa)) is belt. The interval 863–1082 (SINDSKILSL…NIVYEGQILR (220 aa)) is N-terminus of receptor binding domain (N-RBD), Hcn. Residues 1083–1276 (NVIKDYWGNP…FISRDPGWVE (194 aa)) form a C-terminus of receptor binding domain (C-RBD), Hcc region. Residues threonine 1172, aspartate 1173, lysine 1192, and arginine 1239 each coordinate N-acetyl-beta-neuraminate. Residues 1235 to 1245 (YKPWRFSFKNA) form a ganglioside-binding loop region. Residues 1252–1255 (TNYE) carry the Host ganglioside-binding motif motif.

It belongs to the peptidase M27 family. Heterodimer; disulfide-linked heterodimer of a light chain (LC) and a heavy chain (HC). The LC has the proteolytic/pharmacological activity. The N- and C-termini of the HC mediate channel formation and eukaryotic host cell binding, respectively. Can also be purified in complex with a non-toxic component that is larger than the HC. Single chain toxin from strain D-4947 copurifies with NTHNA, and in complexes that include NTNHA, HA-70, HA-33 and HA-17. Dichain toxin from strain CB-16 phage d-16 phi copurifies with NTHNA, and in complexes that include NTNHA, HA-55, HA-33, HA-22 and HA-17. The stoichiometry of the whole complex has been modeled as one BoNT/D, one NTNHA, three HA-70, six HA-33 and three HA-17. HC interacts with eukaryotic protein synaptic vesicle glycoprotein 2B (SV2B), which may serve as its receptor. Another group does not find a convincing interaction with SV2. It depends on Zn(2+) as a cofactor.

The protein localises to the secreted. It carries out the reaction Limited hydrolysis of proteins of the neuroexocytosis apparatus, synaptobrevins, SNAP25 or syntaxin. No detected action on small molecule substrates.. Its activity is regulated as follows. Inhibited by dipicolinic acid, captopril, 1,10-phenanthroline and EDTA. Its function is as follows. Botulinum toxin causes flaccid paralysis by inhibiting neurotransmitter (acetylcholine) release from the presynaptic membranes of nerve terminals of the eukaryotic host skeletal and autonomic nervous system, with frequent heart or respiratory failure. Precursor of botulinum neurotoxin D for which a proteinaceous coreceptor is controversial. In double SV2A/SV2B knockout mice this toxin does not degrade its synaptobrevin target; introducing SV2A, SV2B or SV2C restores target cleavage. Recognition of SV2 by this toxin does not occur via SV2 glycosylation or its large extracellular loop 4. Another group does not find a convincing interaction with SV2. Thus a protein receptor for this BoNT serotype has yet to be definitively proven. Recognizes at least 1 complex polysialylated ganglioside found on neural tissue. Electrical stimulation increases uptake of toxin in an ex vivo assay, presumably by transiently exposing a receptor usually found in eukaryotic target synaptic vesicles. Upon synaptic vesicle recycling the toxin is taken up via the endocytic pathway; when the pH of the toxin-containing endosome drops a structural rearrangement occurs so that the N-terminus of the heavy chain (HC) forms pores that allows the light chain (LC) to translocate into the cytosol. Once in the cytosol the disulfide bond linking the 2 subunits is reduced and LC cleaves its target protein on synaptic vesicles, preventing their fusion with the cytoplasmic membrane and thus neurotransmitter release. Requires complex eukaryotic host polysialogangliosides for full neurotoxicity and for binding to neurons. Functionally, has proteolytic activity. After translocation into the eukaryotic host cytosol, inhibits neurotransmitter release by acting as a zinc endopeptidase that cleaves the '61-Lys-|-Leu-62' bond of synaptobrevin-1 (VAMP1), and the equivalent 'Lys-|-Leu' sites in VAMP2 and VAMP3. Cleaves the '49-Lys-|-Ile-50' bond of A.californica synaptobrevin (AC P35589). This chain probably has to be partially unfolded to translocate into the eukaryotic host cell cytosol. In terms of biological role, responsible for host epithelial cell transcytosis, host nerve cell targeting and translocation of light chain (LC) into eukaryotic host cell cytosol. Composed of 3 subdomains; the translocation domain (TD), and N-terminus and C-terminus of the receptor-binding domain (RBD). The RBD is responsible for the adherence of the toxin to the eukaryotic target cell surface. The N-terminus of the TD wraps an extended belt around the perimeter of the LC, protecting Zn(2+) in the active site; it may also prevent premature LC dissociation from the translocation channel and protect toxin prior to translocation. The TD inserts into synaptic vesicle membrane to allow translocation into the host cytosol. The RBD binds eukaryotic host phosphatidylethanolamine, which may serve as toxin receptor. Treatment of synaptosomes with proteinase K does not reduce HC binding, suggesting there is no protein receptor or it is protected from extracellular proteases. HC significantly decreases uptake and toxicity of whole BoNT/D. HC also interferes with uptake of tetanus toxin. Has 2 closely located carbohydrate-binding receptor sites and binds at least 1 GT1b ganglioside. Bind gangliosides in the order GD2 &gt; GT1b &gt; GD1b. Interacts with eukaryotic target protein SV2B (synaptic vesicle glycoprotein 2B). Expression of SV2A, SV2B or SV2C in mice knocked-out for the SV2 proteins restores entry of BoNT/D and cleavage of VAMP2, suggesting SV2 acts as its receptor. Unlike BoNT/A and BoNT/E, toxin uptake is not mediated by large extracellular loop 4 of SV2. Another group finds very poor interaction with SV2 proteins, suggesting the possible protein receptor may not have been identified. The chain is Botulinum neurotoxin type D (botD) from Clostridium botulinum (Clostridium botulinum D bacteriophage).